The following is a 530-amino-acid chain: Light-independent protochlorophyllide reductase subunit B (530 aa).

Residue aspartate 36 participates in [4Fe-4S] cluster binding. Aspartate 290 functions as the Proton donor in the catalytic mechanism. 425–426 contributes to the substrate binding site; it reads GL.

This sequence belongs to the ChlB/BchB/BchZ family. Protochlorophyllide reductase is composed of three subunits; ChlL, ChlN and ChlB. Forms a heterotetramer of two ChlB and two ChlN subunits. The cofactor is [4Fe-4S] cluster.

The enzyme catalyses chlorophyllide a + oxidized 2[4Fe-4S]-[ferredoxin] + 2 ADP + 2 phosphate = protochlorophyllide a + reduced 2[4Fe-4S]-[ferredoxin] + 2 ATP + 2 H2O. It functions in the pathway porphyrin-containing compound metabolism; chlorophyll biosynthesis (light-independent). Functionally, component of the dark-operative protochlorophyllide reductase (DPOR) that uses Mg-ATP and reduced ferredoxin to reduce ring D of protochlorophyllide (Pchlide) to form chlorophyllide a (Chlide). This reaction is light-independent. The NB-protein (ChlN-ChlB) is the catalytic component of the complex. This is Light-independent protochlorophyllide reductase subunit B from Synechococcus sp. (strain WH7803).